Consider the following 238-residue polypeptide: Large ribosomal subunit protein uL2 (238 aa).

The tract at residues 198–238 is disordered; it reads HPHGGGLHQSVSRPSTVSRNAPPGRKVGHIASRRTGRRGGA. The span at 206-216 shows a compositional bias: polar residues; that stretch reads QSVSRPSTVSR. Residues 223–238 show a composition bias toward basic residues; sequence KVGHIASRRTGRRGGA.

This sequence belongs to the universal ribosomal protein uL2 family. As to quaternary structure, part of the 50S ribosomal subunit. Forms a bridge to the 30S subunit in the 70S ribosome.

One of the primary rRNA binding proteins. Required for association of the 30S and 50S subunits to form the 70S ribosome, for tRNA binding and peptide bond formation. It has been suggested to have peptidyltransferase activity; this is somewhat controversial. Makes several contacts with the 16S rRNA in the 70S ribosome. The chain is Large ribosomal subunit protein uL2 from Sulfolobus acidocaldarius (strain ATCC 33909 / DSM 639 / JCM 8929 / NBRC 15157 / NCIMB 11770).